A 75-amino-acid chain; its full sequence is Sec-independent protein translocase protein TatA (75 aa).

Residues 1–21 traverse the membrane as a helical segment; that stretch reads MGSFSIWHWLIVLVIVLLVFG. The tract at residues 41–75 is disordered; it reads KGMHDDDKPAGKLGDDSRSAEQAREAQAERDRDAR.

Belongs to the TatA/E family. As to quaternary structure, the Tat system comprises two distinct complexes: a TatABC complex, containing multiple copies of TatA, TatB and TatC subunits, and a separate TatA complex, containing only TatA subunits. Substrates initially bind to the TatABC complex, which probably triggers association of the separate TatA complex to form the active translocon.

It is found in the cell inner membrane. Part of the twin-arginine translocation (Tat) system that transports large folded proteins containing a characteristic twin-arginine motif in their signal peptide across membranes. TatA could form the protein-conducting channel of the Tat system. This chain is Sec-independent protein translocase protein TatA, found in Xanthomonas campestris pv. campestris (strain 8004).